We begin with the raw amino-acid sequence, 462 residues long: MSNRMWGGRFASGPAEIMEEINASIGFDKRLAPQDIRGSLAHVAMLGKTGILPQADVAAIQAGLKTVQAEIESGAFTFARSLEDIHMNVESRLREIVGPAAGRLHTARSRNDQVATDMRLWVRDTLDELDAQAADLQRALAETALKHAGTVMPGFTHLQSAQPVTFGHHLLAYVEMLARDRGRFRDARARLNECPLGAAALAGTSFPIDRHATAAALGFDRPTANSLDSVADRDFALEALSAAAIAAVHLSRFAEEIVIWTSAQFGFVKLSDRFTTGSSIMPQKRNPDAAELVRAKAGRVIGALSGLLIVMKGLPLAYSKDMQEDKEGTFDALQTLSLCLAAMAGMVRDLEPVPEMLKAAAGSGYATATDLADWLVRELGLPFRDAHHVTGRLVGVAAARGVGLEALSLAEMQAEEPRITAAVYDVLGVENSVASRTSYGGTAPANVRAQAERWLKALSETK.

Belongs to the lyase 1 family. Argininosuccinate lyase subfamily.

It localises to the cytoplasm. The enzyme catalyses 2-(N(omega)-L-arginino)succinate = fumarate + L-arginine. The protein operates within amino-acid biosynthesis; L-arginine biosynthesis; L-arginine from L-ornithine and carbamoyl phosphate: step 3/3. In Methylobacterium nodulans (strain LMG 21967 / CNCM I-2342 / ORS 2060), this protein is Argininosuccinate lyase.